The following is a 277-amino-acid chain: MDIALLIKAAIMGVVEGLTEFLPISSTGHLILAGALLGFDDDKAKVFDIAIQTGAIFAVILVYWQKIRDTLVALPTEKQAQQFALNVLVAFVPAVVLGLLFGKAIQAHLFTPVVVASTFVIGGFIILWAEKRQERNPAVARIHEVEAMTVMDALKVGLVQCLAMIPGTSRSGATIIGGMLLGLSRKAATDFSFYLAIPTLIGAGVYSLYKERALLSVADVPLFMVGLVFSFVSAWLCIRWLLRYISSHSFIPFAWYRIAFGVVVLATAWSGVVTWTP.

Helical transmembrane passes span 3–23 (IALLIKAAIMGVVEGLTEFLP), 44–64 (AKVFDIAIQTGAIFAVILVYW), 82–102 (QFALNVLVAFVPAVVLGLLFG), 109–129 (LFTPVVVASTFVIGGFIILWA), 188–208 (ATDFSFYLAIPTLIGAGVYSL), 218–238 (ADVPLFMVGLVFSFVSAWLCI), and 249–269 (SFIPFAWYRIAFGVVVLATAW).

It belongs to the UppP family.

It localises to the cell inner membrane. It catalyses the reaction di-trans,octa-cis-undecaprenyl diphosphate + H2O = di-trans,octa-cis-undecaprenyl phosphate + phosphate + H(+). In terms of biological role, catalyzes the dephosphorylation of undecaprenyl diphosphate (UPP). Confers resistance to bacitracin. This Polaromonas sp. (strain JS666 / ATCC BAA-500) protein is Undecaprenyl-diphosphatase.